The chain runs to 81 residues: Small ribosomal subunit protein bS16 (81 aa).

The protein belongs to the bacterial ribosomal protein bS16 family.

This chain is Small ribosomal subunit protein bS16, found in Clostridium perfringens (strain ATCC 13124 / DSM 756 / JCM 1290 / NCIMB 6125 / NCTC 8237 / Type A).